Here is a 462-residue protein sequence, read N- to C-terminus: uncharacterized protein (462 aa).

Helical transmembrane passes span 381 to 401 and 433 to 453; these read WILG…FKGM and LWIL…NLYI.

The protein localises to the cell membrane. This is an uncharacterized protein from Methanocaldococcus jannaschii (strain ATCC 43067 / DSM 2661 / JAL-1 / JCM 10045 / NBRC 100440) (Methanococcus jannaschii).